A 1046-amino-acid chain; its full sequence is Hemoglobin-haptoglobin-binding protein A (1046 aa).

The N-terminal stretch at 1-24 (MTNFRLNLLAYSVMLGLTAGVAYA) is a signal peptide. 4 repeat units span residues 26 to 29 (QPTN), 30 to 33 (QPTN), 34 to 37 (QPTN), and 38 to 41 (QPTN). A 4 X 4 AA tandem repeats of Q-P-T-N region spans residues 26 to 41 (QPTNQPTNQPTNQPTN). The short motif at 51-58 (EQINVLGS) is the TonB box element. Residues 61–188 (HNDNTPPKIA…LGGSVSFDTK (128 aa)) enclose the TBDR plug domain. A TBDR beta-barrel domain is found at 196 to 1046 (NKNYYASYKR…NYRMSVQFEF (851 aa)). The TonB C-terminal box motif lies at 1029 to 1046 (NRFYAPGRNYRMSVQFEF).

It belongs to the TonB-dependent receptor family. Hemoglobin/haptoglobin binding protein subfamily.

Its subcellular location is the cell outer membrane. Functionally, acts as a receptor for the hemoglobin/haptoglobin complex of the human host and is required for heme uptake. Does not bind hemoglobin alone. The protein is Hemoglobin-haptoglobin-binding protein A (hhuA) of Haemophilus influenzae.